The chain runs to 378 residues: MTNKKVVVLVAGGTGGHLFPAEALAVELRQRGYDVHLATDERAKRFVRHFDEKHIHIISSATLVRHHPFALIKTFWLLLRGMVQSWILFRKLRPVLVGGFGGYPTVPPVWVAALTGRVTFIHEQNAVMGRANRVLATRVNAIASGLLLENKIHIHKTFVTGNPVREAILKAAEIPYCASTSKQPFYFLVFGGSQGASAFSRIVPEAVKLLDHDIRERLHIVQQVRGEEIDLAKIYQDMGVQAEVAPFFDNMVEHIARSHFIMSRAGASTVCEIAIIGRPALLIPYPHALDHDQAANAALLAARGGAQIMLEKDLNAQILSSLLTKFCCEPHSLEQRALAAKKVGKPQATRVLADMAEALIVGRSLLDMKREFFDENTT.

UDP-N-acetyl-alpha-D-glucosamine-binding positions include 14–16 (TGG), asparagine 125, arginine 165, serine 193, and glutamine 293.

The protein belongs to the glycosyltransferase 28 family. MurG subfamily.

The protein resides in the cell inner membrane. It carries out the reaction di-trans,octa-cis-undecaprenyl diphospho-N-acetyl-alpha-D-muramoyl-L-alanyl-D-glutamyl-meso-2,6-diaminopimeloyl-D-alanyl-D-alanine + UDP-N-acetyl-alpha-D-glucosamine = di-trans,octa-cis-undecaprenyl diphospho-[N-acetyl-alpha-D-glucosaminyl-(1-&gt;4)]-N-acetyl-alpha-D-muramoyl-L-alanyl-D-glutamyl-meso-2,6-diaminopimeloyl-D-alanyl-D-alanine + UDP + H(+). It participates in cell wall biogenesis; peptidoglycan biosynthesis. Cell wall formation. Catalyzes the transfer of a GlcNAc subunit on undecaprenyl-pyrophosphoryl-MurNAc-pentapeptide (lipid intermediate I) to form undecaprenyl-pyrophosphoryl-MurNAc-(pentapeptide)GlcNAc (lipid intermediate II). The chain is UDP-N-acetylglucosamine--N-acetylmuramyl-(pentapeptide) pyrophosphoryl-undecaprenol N-acetylglucosamine transferase from Bartonella bacilliformis (strain ATCC 35685 / KC583 / Herrer 020/F12,63).